The primary structure comprises 353 residues: Photosystem II protein D1 (353 aa).

Thr2 is subject to N-acetylthreonine. Thr2 bears the Phosphothreonine mark. Transmembrane regions (helical) follow at residues 29 to 46 (YIGWFGVLMIPTLLTATS), 118 to 133 (HFLLGVACYMGREWEL), and 142 to 156 (WIAVAYSAPVAAATA). His118 contributes to the chlorophyll a binding site. Tyr126 serves as a coordination point for pheophytin a. Asp170 and Glu189 together coordinate [CaMn4O5] cluster. Residues 197-218 (FHMLGVAGVFGGSLFSAMHGSL) form a helical membrane-spanning segment. His198 is a binding site for chlorophyll a. A quinone-binding positions include His215 and 264 to 265 (SF). His215 is a binding site for Fe cation. His272 contributes to the Fe cation binding site. A helical membrane pass occupies residues 274–288 (FLAAWPVIGIWFTAL). 4 residues coordinate [CaMn4O5] cluster: His332, Glu333, Asp342, and Ala344. The propeptide occupies 345–353 (AIEAPSTNG).

The protein belongs to the reaction center PufL/M/PsbA/D family. As to quaternary structure, PSII is composed of 1 copy each of membrane proteins PsbA, PsbB, PsbC, PsbD, PsbE, PsbF, PsbH, PsbI, PsbJ, PsbK, PsbL, PsbM, PsbT, PsbX, PsbY, PsbZ, Psb30/Ycf12, at least 3 peripheral proteins of the oxygen-evolving complex and a large number of cofactors. It forms dimeric complexes. It depends on The D1/D2 heterodimer binds P680, chlorophylls that are the primary electron donor of PSII, and subsequent electron acceptors. It shares a non-heme iron and each subunit binds pheophytin, quinone, additional chlorophylls, carotenoids and lipids. D1 provides most of the ligands for the Mn4-Ca-O5 cluster of the oxygen-evolving complex (OEC). There is also a Cl(-1) ion associated with D1 and D2, which is required for oxygen evolution. The PSII complex binds additional chlorophylls, carotenoids and specific lipids. as a cofactor. In terms of processing, tyr-161 forms a radical intermediate that is referred to as redox-active TyrZ, YZ or Y-Z. C-terminally processed by CTPA; processing is essential to allow assembly of the oxygen-evolving complex and thus photosynthetic growth.

It localises to the plastid. Its subcellular location is the chloroplast thylakoid membrane. It carries out the reaction 2 a plastoquinone + 4 hnu + 2 H2O = 2 a plastoquinol + O2. Functionally, photosystem II (PSII) is a light-driven water:plastoquinone oxidoreductase that uses light energy to abstract electrons from H(2)O, generating O(2) and a proton gradient subsequently used for ATP formation. It consists of a core antenna complex that captures photons, and an electron transfer chain that converts photonic excitation into a charge separation. The D1/D2 (PsbA/PsbD) reaction center heterodimer binds P680, the primary electron donor of PSII as well as several subsequent electron acceptors. The sequence is that of Photosystem II protein D1 from Amaranthus hybridus (Slim amaranth).